The sequence spans 2763 residues: Large tegument protein deneddylase (2763 aa).

A deubiquitination activity region spans residues 1 to 247 (MDIIPPIAVT…CDTYFTDEQY (247 aa)). The Peptidase C76 domain maps to 12–237 (AGVGSRNQFD…SSAVTLIYGS (226 aa)). Residues cysteine 32, aspartate 168, and histidine 170 contribute to the active site. The interval 495-523 (LELFINLTILRLTGFVVENGTRTHHGATS) is interaction with inner tegument protein. The tract at residues 2456–2476 (VRPAQPAQPAQPAQPAQTVQP) is disordered. A run of 5 repeats spans residues 2458-2460 (PAQ), 2461-2463 (PAQ), 2464-2466 (PAQ), 2467-2469 (PAQ), and 2470-2472 (PAQ). The interval 2458-2472 (PAQPAQPAQPAQPAQ) is 5 X 3 AA repeats of P-A-Q. Residues 2459–2476 (AQPAQPAQPAQPAQTVQP) show a composition bias toward low complexity.

The protein belongs to the herpesviridae large tegument protein family. Interacts with host CUL1 and CUL4A; these interactions inhibit the E3 ligase activity of cullins. Interacts with inner tegument protein. Interacts with capsid vertex specific component CVC2. Interacts with the major capsid protein/MCP.

The protein localises to the virion tegument. It localises to the host cytoplasm. The protein resides in the host nucleus. The catalysed reaction is Thiol-dependent hydrolysis of ester, thioester, amide, peptide and isopeptide bonds formed by the C-terminal Gly of ubiquitin (a 76-residue protein attached to proteins as an intracellular targeting signal).. Its function is as follows. Large tegument protein that plays multiple roles in the viral cycle. During viral entry, remains associated with the capsid while most of the tegument is detached and participates in the capsid transport toward the host nucleus. Plays a role in the routing of the capsid at the nuclear pore complex and subsequent uncoating. Within the host nucleus, acts as a deneddylase and promotes the degradation of nuclear CRLs (cullin-RING ubiquitin ligases) and thereby stabilizes nuclear CRL substrates, while cytoplasmic CRLs remain unaffected. These modifications prevent host cell cycle S-phase progression and create a favorable environment allowing efficient viral genome replication. Participates later in the secondary envelopment of capsids. Indeed, plays a linker role for the association of the outer viral tegument to the capsids together with the inner tegument protein. In Homo sapiens (Human), this protein is Large tegument protein deneddylase.